The sequence spans 502 residues: Glycerol kinase (502 aa).

T14 lines the ADP pocket. ATP contacts are provided by T14, T15, and S16. T14 contributes to the sn-glycerol 3-phosphate binding site. Position 18 (R18) interacts with ADP. Sn-glycerol 3-phosphate contacts are provided by R84, E85, Y137, and D247. Glycerol-binding residues include R84, E85, Y137, D247, and Q248. Residues T269 and G312 each coordinate ADP. T269, G312, Q316, and G413 together coordinate ATP. ADP is bound by residues G413 and N417.

It belongs to the FGGY kinase family. Homotetramer and homodimer (in equilibrium). Heterodimer with EIIA-Glc. Binds 1 zinc ion per glycerol kinase EIIA-Glc dimer. The zinc ion is important for dimerization.

The enzyme catalyses glycerol + ATP = sn-glycerol 3-phosphate + ADP + H(+). It functions in the pathway polyol metabolism; glycerol degradation via glycerol kinase pathway; sn-glycerol 3-phosphate from glycerol: step 1/1. Activity of this regulatory enzyme is affected by several metabolites. Allosterically and non-competitively inhibited by fructose 1,6-bisphosphate (FBP) and unphosphorylated phosphocarrier protein EIIA-Glc (III-Glc), an integral component of the bacterial phosphotransferase (PTS) system. Its function is as follows. Key enzyme in the regulation of glycerol uptake and metabolism. Catalyzes the phosphorylation of glycerol to yield sn-glycerol 3-phosphate. This chain is Glycerol kinase, found in Photorhabdus laumondii subsp. laumondii (strain DSM 15139 / CIP 105565 / TT01) (Photorhabdus luminescens subsp. laumondii).